The following is a 304-amino-acid chain: Quinolinate synthase (304 aa).

Residues histidine 23 and serine 40 each coordinate iminosuccinate. Cysteine 86 is a [4Fe-4S] cluster binding site. Iminosuccinate-binding positions include 112–114 and serine 129; that span reads YVN. Cysteine 173 provides a ligand contact to [4Fe-4S] cluster. Residues 199–201 and threonine 216 contribute to the iminosuccinate site; that span reads HPE. Cysteine 260 contributes to the [4Fe-4S] cluster binding site.

It belongs to the quinolinate synthase family. Type 2 subfamily. [4Fe-4S] cluster is required as a cofactor.

It localises to the cytoplasm. The enzyme catalyses iminosuccinate + dihydroxyacetone phosphate = quinolinate + phosphate + 2 H2O + H(+). The protein operates within cofactor biosynthesis; NAD(+) biosynthesis; quinolinate from iminoaspartate: step 1/1. Its function is as follows. Catalyzes the condensation of iminoaspartate with dihydroxyacetone phosphate to form quinolinate. The protein is Quinolinate synthase of Methanothermobacter thermautotrophicus (strain ATCC 29096 / DSM 1053 / JCM 10044 / NBRC 100330 / Delta H) (Methanobacterium thermoautotrophicum).